Here is a 435-residue protein sequence, read N- to C-terminus: Angio-associated migratory cell protein (435 aa).

Residues 1-65 (MESESESGAA…EEEEEGNEEG (65 aa)) form a disordered region. Residue Ser-20 is modified to Phosphoserine. A compositionally biased stretch (acidic residues) spans 39–63 (DPDDLAQEMEDVDFEEEEEEEEGNE). WD repeat units follow at residues 90–130 (LHSA…LLFE), 133–172 (GHKD…EVWS), 174–213 (EAGD…KTFQ), 215–255 (PNCP…HVLK), 259–300 (GHQG…GVFR), 316–355 (SESN…LRHQ), 357–396 (QHQS…LLTD), and 399–434 (GHTA…QRPD).

It is found in the cell membrane. The protein resides in the cytoplasm. Its function is as follows. Plays a role in angiogenesis and cell migration. In smooth muscle cell migration, may act through the RhoA pathway. In Canis lupus familiaris (Dog), this protein is Angio-associated migratory cell protein (AAMP).